The chain runs to 551 residues: Cytochrome c oxidase subunit 1 (551 aa).

Residues 29-49 form a helical membrane-spanning segment; that stretch reads VIGIQYLVTSFLFFFIGGSFA. His76 provides a ligand contact to Fe(II)-heme a. 11 helical membrane passes run 79 to 99, 113 to 133, 156 to 176, 205 to 225, 245 to 265, 283 to 303, 313 to 333, 348 to 368, 382 to 402, 424 to 444, and 466 to 486; these read IMIF…LIPL, AVAF…FFVG, LWIL…INFV, LILL…FDLI, LFWF…FGVI, IAYS…HHMF, MFFM…IFSW, MLFA…GVMV, FVVG…LFSG, FILT…LGLM, and IGAY…FWSL. His251, Tyr255, His300, and His301 together coordinate Cu cation. Residues 251–255 constitute a cross-link (1'-histidyl-3'-tyrosine (His-Tyr)); that stretch reads HPAVY. Residue His386 participates in heme a3 binding. His388 is a binding site for Fe(II)-heme a.

It belongs to the heme-copper respiratory oxidase family. It depends on Cu(2+) as a cofactor. Requires heme as cofactor.

It localises to the cell membrane. It carries out the reaction 4 Fe(II)-[cytochrome c] + O2 + 8 H(+)(in) = 4 Fe(III)-[cytochrome c] + 2 H2O + 4 H(+)(out). It functions in the pathway energy metabolism; oxidative phosphorylation. In terms of biological role, cytochrome c oxidase is the component of the respiratory chain that catalyzes the reduction of oxygen to water. Subunits 1-3 form the functional core of the enzyme complex. CO I is the catalytic subunit of the enzyme. Electrons originating in cytochrome c are transferred via the copper A center of subunit 2 and heme A of subunit 1 to the bimetallic center formed by heme A3 and copper B. In Synechocystis sp. (strain ATCC 27184 / PCC 6803 / Kazusa), this protein is Cytochrome c oxidase subunit 1 (ctaD).